Reading from the N-terminus, the 177-residue chain is DELTA-stichotoxin-Hcr4b (177 aa).

A plays an important role in the hemolytic activity region spans residues 3–12; that stretch reads ALAGTITLGA. The tract at residues 11-30 is N-terminal region; it reads GASLGFQILDKVLGELGKVS. Ser54, Val87, Ser105, Pro107, Tyr133, Tyr137, and Tyr138 together coordinate phosphocholine. Residues 105–120 are trp-rich region, which is important for the binding to lipid membrane; the sequence is SVPFDYNLYSNWWDVK.

The protein belongs to the actinoporin family. Sea anemone subfamily. In terms of assembly, octamer or nonamer in membranes. Monomer in the soluble state.

It localises to the secreted. The protein localises to the nematocyst. It is found in the target cell membrane. Functionally, pore-forming protein that forms cations-selective hydrophilic pores of around 1 nm and causes cardiac stimulation and cytolysis. Pore formation is a multi-step process that involves specific recognition of membrane sphingomyelin (but neither cholesterol nor phosphatidylcholine) using aromatic rich region and adjacent phosphocholine (POC) binding site, firm binding to the membrane (mainly driven by hydrophobic interactions) accompanied by the transfer of the N-terminal region to the lipid-water interface and finally pore formation after oligomerization of monomers. Cytolytic effects include red blood cells hemolysis, platelet aggregation and lysis, cytotoxic and cytostatic effects on fibroblasts. Lethality in mammals has been ascribed to severe vasospasm of coronary vessels, cardiac arrhythmia, and inotropic effects. Preincubation with exogenous sphingomyeline causes complete loss of hemolytic activity. This Radianthus crispa (Leathery sea anemone) protein is DELTA-stichotoxin-Hcr4b.